The chain runs to 297 residues: MLNGIVVVNKPRGVTSSDCVYKLRKILQIRKIGHAGTLDPEVNGVLPIAIGQATKLIELMHEKPKSYIGSGMFGKATDSYDLDGTTTAEEKIVTPFTSDEIISGMKKLTGKIDQVPPIYSAVRVNGKRLYEYARENIPVERPKRKVNIYSYELTQDPEYDPLEKTESFNFAIRCSKGTYVRSLVNDLGEELGVPAVMTSLTRTSSSGFDLSQAVDLETIEKEIDYPEKWLQPIDSFFVDLPQLQISPDQFKRVSNGASIKLNTTYAKVALVYNGHIKAIYQRQGKIYRPEMMLLKNE.

The Nucleophile role is filled by aspartate 39.

This sequence belongs to the pseudouridine synthase TruB family. Type 1 subfamily.

The catalysed reaction is uridine(55) in tRNA = pseudouridine(55) in tRNA. Functionally, responsible for synthesis of pseudouridine from uracil-55 in the psi GC loop of transfer RNAs. The chain is tRNA pseudouridine synthase B from Lactobacillus johnsonii (strain CNCM I-12250 / La1 / NCC 533).